Reading from the N-terminus, the 346-residue chain is L-threonine dehydratase catabolic TdcB (346 aa).

Residue 59–60 (FT) coordinates AMP. An N6-(pyridoxal phosphate)lysine modification is found at lysine 64. AMP is bound by residues glutamine 94, 125–126 (GY), and asparagine 321.

The protein belongs to the serine/threonine dehydratase family. In the native structure, TdcB is in a dimeric form, whereas in the TdcB-AMP complex, it exists in a tetrameric form (dimer of dimers). It depends on pyridoxal 5'-phosphate as a cofactor.

The enzyme catalyses L-threonine = 2-oxobutanoate + NH4(+). It functions in the pathway amino-acid degradation; L-threonine degradation via propanoate pathway; propanoate from L-threonine: step 1/4. With respect to regulation, each protein molecule can bind up to four molecules of AMP, which act as an allosteric activator to the enzyme. Functionally, catalyzes the anaerobic formation of alpha-ketobutyrate and ammonia from threonine in a two-step reaction. The first step involved a dehydration of threonine and a production of enamine intermediates (aminocrotonate), which tautomerizes to its imine form (iminobutyrate). Both intermediates are unstable and short-lived. The second step is the nonenzymatic hydrolysis of the enamine/imine intermediates to form 2-ketobutyrate and free ammonia. In the low water environment of the cell, the second step is accelerated by RidA. The protein is L-threonine dehydratase catabolic TdcB (tdcB) of Staphylococcus aureus (strain bovine RF122 / ET3-1).